The following is a 374-amino-acid chain: Chaperone protein DnaJ (374 aa).

The region spanning 5 to 70 (DYYEILGVSR…QKRAAYDQYG (66 aa)) is the J domain. The CR-type zinc finger occupies 129-207 (GVTREIRIPT…CHGHGRVEKS (79 aa)). Positions 142, 145, 159, 162, 181, 184, 195, and 198 each coordinate Zn(2+). CXXCXGXG motif repeat units lie at residues 142 to 149 (CDVCHGSG), 159 to 166 (CPTCHGQG), 181 to 188 (CPTCQGQG), and 195 to 202 (CTKCHGHG).

The protein belongs to the DnaJ family. As to quaternary structure, homodimer. It depends on Zn(2+) as a cofactor.

Its subcellular location is the cytoplasm. Functionally, participates actively in the response to hyperosmotic and heat shock by preventing the aggregation of stress-denatured proteins and by disaggregating proteins, also in an autonomous, DnaK-independent fashion. Unfolded proteins bind initially to DnaJ; upon interaction with the DnaJ-bound protein, DnaK hydrolyzes its bound ATP, resulting in the formation of a stable complex. GrpE releases ADP from DnaK; ATP binding to DnaK triggers the release of the substrate protein, thus completing the reaction cycle. Several rounds of ATP-dependent interactions between DnaJ, DnaK and GrpE are required for fully efficient folding. Also involved, together with DnaK and GrpE, in the DNA replication of plasmids through activation of initiation proteins. The sequence is that of Chaperone protein DnaJ from Sodalis glossinidius (strain morsitans).